Here is a 451-residue protein sequence, read N- to C-terminus: Vacuolar cation/proton exchanger 1a (451 aa).

Residues 1–58 lie on the Cytoplasmic side of the membrane; it reads MEAAAAMEAGRKLAARHPHGRSRTAHNMSSSSLRKKSDAALVRKVPVAPLRPLLANLQ. The disordered stretch occupies residues 9 to 37; the sequence is AGRKLAARHPHGRSRTAHNMSSSSLRKKS. Basic residues predominate over residues 13 to 24; sequence LAARHPHGRSRT. Residues 59 to 79 traverse the membrane as a helical segment; that stretch reads EVFLATKLAVLFPAVPLAIAA. Topologically, residues 80–86 are vacuolar; that stretch reads QCFRFDQ. Residues 87-107 traverse the membrane as a helical segment; that stretch reads VWVFALSLLGLIPLAERVSFL. The Cytoplasmic segment spans residues 108–120; it reads TEQIALYTGPTVG. Residues 121–141 form a helical membrane-spanning segment; sequence GLLNATCGNATELIIALFALL. Positions 128–163 are cation selection; it reads GNATELIIALFALLKGKIEVVKCSLLGSVLSNLLLV. Topologically, residues 142-153 are vacuolar; that stretch reads KGKIEVVKCSLL. A helical transmembrane segment spans residues 154-174; the sequence is GSVLSNLLLVLGTSLFCGGVV. Residues 175–191 are Cytoplasmic-facing; sequence NLGARQPYDRNQSDVST. Residues 192 to 212 traverse the membrane as a helical segment; that stretch reads ALLFLAVLCHSAPLLLRYAVA. Topologically, residues 213 to 228 are vacuolar; it reads AGEHSVSATSAAASLD. Residues 229 to 249 form a helical membrane-spanning segment; it reads LSRACSFVMLASYVAYLFFQL. Topologically, residues 250-273 are cytoplasmic; sequence KTHRQLFEPQEVDGGDAGDDDEEP. Residues 274–294 form a helical membrane-spanning segment; that stretch reads ALGFASALFWLALMTAVISVL. Over 295–317 the chain is Vacuolar; sequence SEYVVGTIEPTSQSWGLSVSFIS. The helical transmembrane segment at 318–338 threads the bilayer; the sequence is IILLPIVGNAAEHAGAIIFAL. The cation selection stretch occupies residues 325–360; it reads GNAAEHAGAIIFALKNKLDITLGVALGSATQISMFV. Residues 339–352 lie on the Cytoplasmic side of the membrane; that stretch reads KNKLDITLGVALGS. Residues 353–373 traverse the membrane as a helical segment; sequence ATQISMFVVPLSVLVAWIMGV. At 374-378 the chain is on the vacuolar side; sequence QMDLD. A helical transmembrane segment spans residues 379–399; that stretch reads FKLLETGSLFMAVLVTAFTLQ. Over 400-404 the chain is Cytoplasmic; it reads DGTSH. The helical transmembrane segment at 405–425 threads the bilayer; the sequence is YLKGILLLLCYIVIGACFFVA. At 426 to 451 the chain is on the vacuolar side; it reads RQPAGHANSNGALLDVPTGSMSVQAA.

This sequence belongs to the Ca(2+):cation antiporter (CaCA) (TC 2.A.19) family. Cation/proton exchanger (CAX) subfamily. As to expression, ubiquitous.

Its subcellular location is the vacuole membrane. Its function is as follows. Vacuolar cation/proton exchanger (CAX). Translocates Ca(2+) and other metal ions into vacuoles using the proton gradient formed by H(+)-ATPase and H(+)-pyrophosphatase. This is Vacuolar cation/proton exchanger 1a (CAX1a) from Oryza sativa subsp. japonica (Rice).